An 89-amino-acid chain; its full sequence is Submaxillary mucin (89 aa).

The segment at 1–89 is disordered; that stretch reads AGSVGRTAGG…VGGSPVATTL (89 aa). An O-linked (GalNAc...) serine; partial glycan is attached at S3. T7 and T14 each carry an O-linked (GalNAc...) threonine; partial glycan. O-linked (GalNAc...) serine; partial glycosylation is present at S15. The O-linked (GalNAc...) threonine; partial glycan is linked to T23. Residue S25 is glycosylated (O-linked (GalNAc...) serine; partial). The O-linked (GalNAc...) threonine; partial glycan is linked to T27. An O-linked (GalNAc...) serine; partial glycan is attached at S29. A glycan (O-linked (GalNAc...) threonine; partial) is linked at T34. O-linked (GalNAc...) serine; partial glycosylation occurs at S38. Residue T42 is glycosylated (O-linked (GalNAc...) threonine; partial). O-linked (GalNAc...) serine; partial glycosylation is found at S47 and S49. T50 carries O-linked (GalNAc...) threonine; partial glycosylation. O-linked (GalNAc...) serine; partial glycosylation is present at S54. Residues 56–71 are compositionally biased toward low complexity; that stretch reads APGTTLAGRAGTTLGP. T59, T60, T67, and T68 each carry an O-linked (GalNAc...) threonine; partial glycan. O-linked (GalNAc...) serine; partial glycosylation is found at S73 and S76. A glycan (O-linked (GalNAc...) threonine; partial) is linked at T78. O-linked (GalNAc...) serine; partial glycosylation is present at S83.

Heavily O-glycosylated at most but not all Ser and Thr residues. Expressed in the submaxillary salivary gland.

Its subcellular location is the secreted. This Canis lupus familiaris (Dog) protein is Submaxillary mucin.